Here is a 470-residue protein sequence, read N- to C-terminus: Serine/threonine-protein kinase-like protein At1g28390 (470 aa).

One can recognise a Protein kinase domain in the interval 52-333; sequence FSANNFLGKG…LEVVECLKTV (282 aa). ATP-binding positions include 58 to 66 and K81; that span reads LGKGSHGRV. D186 functions as the Proton acceptor in the catalytic mechanism. Phosphothreonine occurs at positions 221 and 226. Y234 bears the Phosphotyrosine mark.

The protein belongs to the protein kinase superfamily. Ser/Thr protein kinase family.

It carries out the reaction L-seryl-[protein] + ATP = O-phospho-L-seryl-[protein] + ADP + H(+). The enzyme catalyses L-threonyl-[protein] + ATP = O-phospho-L-threonyl-[protein] + ADP + H(+). This Arabidopsis thaliana (Mouse-ear cress) protein is Serine/threonine-protein kinase-like protein At1g28390.